We begin with the raw amino-acid sequence, 120 residues long: Protein Wnt-9 (120 aa).

Residue serine 1 is the site of O-palmitoleoyl serine; by PORCN attachment. Cysteine 90 and cysteine 101 form a disulfide bridge.

It belongs to the Wnt family. Palmitoleoylation is required for efficient binding to frizzled receptors. Depalmitoleoylation leads to Wnt signaling pathway inhibition.

It is found in the secreted. It localises to the extracellular space. The protein resides in the extracellular matrix. Functionally, ligand for members of the frizzled family of seven transmembrane receptors. Probable developmental protein. May be a signaling molecule which affects the development of discrete regions of tissues. Is likely to signal over only few cell diameters. This is Protein Wnt-9 (WNT-9) from Alopias vulpinus (Common thresher shark).